The primary structure comprises 240 residues: Probable Ni/Fe-hydrogenase B-type cytochrome subunit (240 aa).

A run of 4 helical transmembrane segments spans residues 31-51 (LWHWVTALSIVVLGVTGYFIG), 75-95 (FAAGYVLAIGFLGRVYWAFVG), 142-163 (LAMFCFFVIGAVFMSVTGFALY), and 196-213 (LGMWYLVVFVMIHVYLAA).

Belongs to the HupC/HyaC/HydC family.

The protein resides in the cell membrane. Probable b-type cytochrome. The polypeptide is Probable Ni/Fe-hydrogenase B-type cytochrome subunit (hupZ) (Azotobacter chroococcum mcd 1).